The sequence spans 776 residues: DNA topoisomerase 1 (776 aa).

The Toprim domain occupies 1 to 111 (MKLVIVESPA…VKSDDFFKRV (111 aa)). Positions 7 and 80 each coordinate Mg(2+). The 437-residue stretch at 132–568 (DTNLVNAQQA…FWSGFNHNIE (437 aa)) folds into the Topo IA-type catalytic domain. Positions 166–171 (SAGRVQ) are interaction with DNA. Residue tyrosine 304 is the O-(5'-phospho-DNA)-tyrosine intermediate of the active site. The C4-type zinc-finger motif lies at 600–627 (CPSCNTGELSLKLGKFGAFLACSNYPEC).

Belongs to the type IA topoisomerase family. In terms of assembly, monomer. It depends on Mg(2+) as a cofactor.

The enzyme catalyses ATP-independent breakage of single-stranded DNA, followed by passage and rejoining.. Releases the supercoiling and torsional tension of DNA, which is introduced during the DNA replication and transcription, by transiently cleaving and rejoining one strand of the DNA duplex. Introduces a single-strand break via transesterification at a target site in duplex DNA. The scissile phosphodiester is attacked by the catalytic tyrosine of the enzyme, resulting in the formation of a DNA-(5'-phosphotyrosyl)-enzyme intermediate and the expulsion of a 3'-OH DNA strand. The free DNA strand then undergoes passage around the unbroken strand, thus removing DNA supercoils. Finally, in the religation step, the DNA 3'-OH attacks the covalent intermediate to expel the active-site tyrosine and restore the DNA phosphodiester backbone. This Rickettsia conorii (strain ATCC VR-613 / Malish 7) protein is DNA topoisomerase 1.